A 66-amino-acid polypeptide reads, in one-letter code: Large ribosomal subunit protein bL35 (66 aa).

Belongs to the bacterial ribosomal protein bL35 family.

The chain is Large ribosomal subunit protein bL35 from Azorhizobium caulinodans (strain ATCC 43989 / DSM 5975 / JCM 20966 / LMG 6465 / NBRC 14845 / NCIMB 13405 / ORS 571).